Here is a 364-residue protein sequence, read N- to C-terminus: tRNA-specific 2-thiouridylase MnmA 1 (364 aa).

ATP-binding positions include 10–17 (GMSGGVDS) and Met36. The Nucleophile role is filled by Cys106. Cys106 and Cys204 are disulfide-bonded. Gly130 provides a ligand contact to ATP. The interval 154-156 (KDQ) is interaction with tRNA. Cys204 serves as the catalytic Cysteine persulfide intermediate. Residues 310 to 311 (RY) are interaction with tRNA.

The protein belongs to the MnmA/TRMU family.

The protein localises to the cytoplasm. It carries out the reaction S-sulfanyl-L-cysteinyl-[protein] + uridine(34) in tRNA + AH2 + ATP = 2-thiouridine(34) in tRNA + L-cysteinyl-[protein] + A + AMP + diphosphate + H(+). Its function is as follows. Catalyzes the 2-thiolation of uridine at the wobble position (U34) of tRNA, leading to the formation of s(2)U34. The sequence is that of tRNA-specific 2-thiouridylase MnmA 1 from Thermoanaerobacter sp. (strain X514).